Consider the following 157-residue polypeptide: 6,7-dimethyl-8-ribityllumazine synthase (157 aa).

Residues phenylalanine 22, 56 to 58, and 81 to 83 contribute to the 5-amino-6-(D-ribitylamino)uracil site; these read AFE and VLI. A (2S)-2-hydroxy-3-oxobutyl phosphate-binding site is contributed by 86-87; it reads ET. Histidine 89 acts as the Proton donor in catalysis. Position 114 (phenylalanine 114) interacts with 5-amino-6-(D-ribitylamino)uracil. Residue arginine 128 coordinates (2S)-2-hydroxy-3-oxobutyl phosphate.

The protein belongs to the DMRL synthase family.

It catalyses the reaction (2S)-2-hydroxy-3-oxobutyl phosphate + 5-amino-6-(D-ribitylamino)uracil = 6,7-dimethyl-8-(1-D-ribityl)lumazine + phosphate + 2 H2O + H(+). It participates in cofactor biosynthesis; riboflavin biosynthesis; riboflavin from 2-hydroxy-3-oxobutyl phosphate and 5-amino-6-(D-ribitylamino)uracil: step 1/2. Functionally, catalyzes the formation of 6,7-dimethyl-8-ribityllumazine by condensation of 5-amino-6-(D-ribitylamino)uracil with 3,4-dihydroxy-2-butanone 4-phosphate. This is the penultimate step in the biosynthesis of riboflavin. This is 6,7-dimethyl-8-ribityllumazine synthase from Chlamydia muridarum (strain MoPn / Nigg).